Reading from the N-terminus, the 60-residue chain is uncharacterized protein (60 aa).

This is an uncharacterized protein from Lepidoptera (butterflies and moths).